A 378-amino-acid polypeptide reads, in one-letter code: Alcohol dehydrogenase (378 aa).

Fe cation-binding residues include Asp195, His199, His262, and His274.

It belongs to the iron-containing alcohol dehydrogenase family. Requires Fe(2+) as cofactor. Mn(2+) is required as a cofactor.

It carries out the reaction a primary alcohol + NAD(+) = an aldehyde + NADH + H(+). It catalyses the reaction butan-1-ol + NAD(+) = butanal + NADH + H(+). The catalysed reaction is hexan-1-ol + NAD(+) = hexanal + NADH + H(+). The enzyme catalyses ethanol + NAD(+) = acetaldehyde + NADH + H(+). Its function is as follows. Thermostable type III alcohol dehydrogenase. For oxidation activity, the best substrates are 1-butanol and 1-hexanol, followed by ethanol. Shows lower activity with ethylene glycol, isopentanol, isopropanol and glycerol. Displays higher reduction activity in the presence of butanal, followed by acetaldehyde. Has lower activity with hexanal and acetone. This chain is Alcohol dehydrogenase, found in Thermococcus barophilus.